Reading from the N-terminus, the 165-residue chain is Transcription elongation factor A protein-like 1 (165 aa).

Residues 1–101 are disordered; that stretch reads MENTRSENEE…EQPPCGVGKH (101 aa). Residues 33–60 show a composition bias toward acidic residues; it reads CSEEDQSSEDLSSEEQSSEEEFFPEELL.

The protein belongs to the TFS-II family. TFA subfamily.

The protein resides in the nucleus. In terms of biological role, may be involved in transcriptional regulation. Modulates various viral and cellular promoters in a promoter context-dependent manner. Does not bind DNA directly. The protein is Transcription elongation factor A protein-like 1 of Mus musculus (Mouse).